The sequence spans 211 residues: Glycerol-3-phosphate acyltransferase (211 aa).

5 consecutive transmembrane segments (helical) span residues 5–25, 55–75, 85–105, 126–146, and 168–188; these read VILGLLALISYLLGSIPTGYL, GPGLVTFLVDVGKGLGAILVA, PVPAGWFEFVLLAIAFIAVLA, VLLALNAPTALATFGVFLVVL, and WFFTQSWPFVGFSVIAGAFVI.

It belongs to the PlsY family. Probably interacts with PlsX.

It localises to the cell inner membrane. It carries out the reaction an acyl phosphate + sn-glycerol 3-phosphate = a 1-acyl-sn-glycero-3-phosphate + phosphate. It functions in the pathway lipid metabolism; phospholipid metabolism. Functionally, catalyzes the transfer of an acyl group from acyl-phosphate (acyl-PO(4)) to glycerol-3-phosphate (G3P) to form lysophosphatidic acid (LPA). This enzyme utilizes acyl-phosphate as fatty acyl donor, but not acyl-CoA or acyl-ACP. The chain is Glycerol-3-phosphate acyltransferase from Thermosynechococcus vestitus (strain NIES-2133 / IAM M-273 / BP-1).